A 600-amino-acid chain; its full sequence is Fructan 1-exohydrolase (600 aa).

The signal sequence occupies residues 1-27 (MAQAWAFLLPVLFFGSYVTNLFLPTYA). The active site involves aspartate 73. Asparagine 166, asparagine 234, and asparagine 246 each carry an N-linked (GlcNAc...) asparagine glycan. The cysteines at positions 444 and 490 are disulfide-linked. N-linked (GlcNAc...) asparagine glycosylation is present at asparagine 565.

It belongs to the glycosyl hydrolase 32 family.

The enzyme catalyses Hydrolysis of terminal, non-reducing (2-&gt;1)-linked beta-D-fructofuranose residues in fructans.. Its activity is regulated as follows. Inhibited by sucrose. Its function is as follows. Hydrolyzes inulin-type beta-(2,1)-fructans. May play a role as a beta-(2,1)-trimmer during graminan biosynthesis. This chain is Fructan 1-exohydrolase, found in Leymus chinensis (Chinese lyme grass).